Here is a 1412-residue protein sequence, read N- to C-terminus: MPN domain-containing protein CG4751 (1412 aa).

Basic and acidic residues predominate over residues 1–10 (MENGVEHGVD). Residues 1-123 (MENGVEHGVD…TKENYEGFNG (123 aa)) form a disordered region. Acidic residues-rich tracts occupy residues 23–35 (GEGD…EVEG) and 103–114 (SDAGDEDNDDET). Residues 113–219 (ETKENYEGFN…AYKNTYLRKC (107 aa)) enclose the RAMA domain. In terms of domain architecture, MPN spans 284-420 (ITVNSSALLL…LESVVKCIWI (137 aa)). 3 residues coordinate Zn(2+): His361, His363, and Asp374. 7 disordered regions span residues 554-589 (INPP…QKAS), 669-734 (SALN…DIAR), 853-891 (GGSG…NSYK), 1027-1066 (SIPP…QQQQ), 1271-1318 (MKPP…NSGG), 1330-1376 (SSVP…SGGV), and 1389-1412 (LAAP…LSHD). Residues 572–600 (SGRKAEEESNAQAEQKASELKVMSLQEQL) adopt a coiled-coil conformation. Ser699, Ser701, Ser705, Ser719, Ser723, and Ser728 each carry phosphoserine. Positions 702–720 (PAKSDTSSHASTSRTRNSP) are enriched in polar residues. Composition is skewed to low complexity over residues 873 to 891 (KSSS…NSYK) and 1036 to 1066 (SSGS…QQQQ). Over residues 1275–1290 (KSTTPSSARTRESSAS) the composition is skewed to polar residues. Residues Ser1288 and Ser1290 each carry the phosphoserine modification. Thr1297 carries the phosphothreonine modification. Over residues 1360-1370 (LYGELAPPGAL) the composition is skewed to low complexity.

It belongs to the peptidase M67 family.

Probable protease. This is MPN domain-containing protein CG4751 from Drosophila melanogaster (Fruit fly).